A 168-amino-acid chain; its full sequence is ATP synthase subunit b (168 aa).

A helical membrane pass occupies residues 11-31 (NTVLGNIIVVSGAFIILLVLL).

It belongs to the ATPase B chain family. In terms of assembly, F-type ATPases have 2 components, F(1) - the catalytic core - and F(0) - the membrane proton channel. F(1) has five subunits: alpha(3), beta(3), gamma(1), delta(1), epsilon(1). F(0) has three main subunits: a(1), b(2) and c(10-14). The alpha and beta chains form an alternating ring which encloses part of the gamma chain. F(1) is attached to F(0) by a central stalk formed by the gamma and epsilon chains, while a peripheral stalk is formed by the delta and b chains.

The protein resides in the cell membrane. Its function is as follows. F(1)F(0) ATP synthase produces ATP from ADP in the presence of a proton or sodium gradient. F-type ATPases consist of two structural domains, F(1) containing the extramembraneous catalytic core and F(0) containing the membrane proton channel, linked together by a central stalk and a peripheral stalk. During catalysis, ATP synthesis in the catalytic domain of F(1) is coupled via a rotary mechanism of the central stalk subunits to proton translocation. Functionally, component of the F(0) channel, it forms part of the peripheral stalk, linking F(1) to F(0). The protein is ATP synthase subunit b of Lactococcus lactis subsp. lactis (strain IL1403) (Streptococcus lactis).